Here is a 239-residue protein sequence, read N- to C-terminus: Dephospho-CoA kinase (239 aa).

One can recognise a DPCK domain in the interval 3-206 (IIGLTGSIAS…GGEGGEPAAG (204 aa)). 11-16 (ASGKST) is a binding site for ATP. The segment at 197–239 (GGEGGEPAAGSSAHHGAGSVDPGAGPCDGPGAAPEAERRGGDR) is disordered. Residues 204 to 230 (AAGSSAHHGAGSVDPGAGPCDGPGAAP) are compositionally biased toward low complexity.

It belongs to the CoaE family.

It localises to the cytoplasm. It catalyses the reaction 3'-dephospho-CoA + ATP = ADP + CoA + H(+). Its pathway is cofactor biosynthesis; coenzyme A biosynthesis; CoA from (R)-pantothenate: step 5/5. In terms of biological role, catalyzes the phosphorylation of the 3'-hydroxyl group of dephosphocoenzyme A to form coenzyme A. The polypeptide is Dephospho-CoA kinase (Symbiobacterium thermophilum (strain DSM 24528 / JCM 14929 / IAM 14863 / T)).